The following is a 318-amino-acid chain: Ribosomal RNA small subunit methyltransferase H (318 aa).

Residues 38-40 (AGH), D57, L91, D105, and Q112 contribute to the S-adenosyl-L-methionine site.

Belongs to the methyltransferase superfamily. RsmH family.

The protein localises to the cytoplasm. It carries out the reaction cytidine(1402) in 16S rRNA + S-adenosyl-L-methionine = N(4)-methylcytidine(1402) in 16S rRNA + S-adenosyl-L-homocysteine + H(+). Functionally, specifically methylates the N4 position of cytidine in position 1402 (C1402) of 16S rRNA. This chain is Ribosomal RNA small subunit methyltransferase H, found in Clavibacter sepedonicus (Clavibacter michiganensis subsp. sepedonicus).